We begin with the raw amino-acid sequence, 349 residues long: Protein RAE1 (349 aa).

Residues 1-21 (MATFGAPATANSNPNKSYEVT) form a disordered region. An N-acetylalanine modification is found at Ala2. Residues 9–21 (TANSNPNKSYEVT) show a composition bias toward polar residues. 5 WD repeats span residues 23 to 62 (SPAD…ASLA), 70 to 109 (SHDQ…QPVT), 112 to 151 (MHEG…PVHT), 153 to 190 (QLPD…TEFK), and 244 to 283 (NDIY…RLKA). The short motif at 128–144 (LLATGSWDKTLKYWDTR) is the DWD box element.

The protein belongs to the WD repeat rae1 family. As to quaternary structure, part of the nuclear pore complex (NPC). The NPC has an eight-fold symmetrical structure comprising a central transport channel and two rings, the cytoplasmic and nuclear rings, to which eight filaments are attached. The cytoplasmic filaments have loose ends, while the nuclear filaments are joined in a distal ring, forming a nuclear basket. NPCs are highly dynamic in configuration and composition, and can be devided in 3 subcomplexes, the NUP62 subcomplex, the NUP107-160 subcomplex and the NUP93 subcomplex, containing approximately 30 different nucleoporin proteins. Interacts with DDB1A.

The protein localises to the nucleus envelope. It localises to the nucleus. Its subcellular location is the nuclear pore complex. The sequence is that of Protein RAE1 from Arabidopsis thaliana (Mouse-ear cress).